The primary structure comprises 141 residues: Galactose-6-phosphate isomerase subunit LacA (141 aa).

This sequence belongs to the LacAB/RpiB family. Heteromultimeric protein consisting of LacA and LacB.

It carries out the reaction aldehydo-D-galactose 6-phosphate = keto-D-tagatose 6-phosphate. It participates in carbohydrate metabolism; D-galactose 6-phosphate degradation; D-tagatose 6-phosphate from D-galactose 6-phosphate: step 1/1. The polypeptide is Galactose-6-phosphate isomerase subunit LacA (Streptococcus pneumoniae (strain Taiwan19F-14)).